A 380-amino-acid polypeptide reads, in one-letter code: E3 ubiquitin-protein ligase PHF7 (380 aa).

The disordered stretch occupies residues 1–23; sequence MRTIKEKKEHPRLRKTARTKKVT. Over residues 10 to 23 the composition is skewed to basic residues; the sequence is HPRLRKTARTKKVT. A C2HC pre-PHD-type zinc finger spans residues 30–68; sequence GPVCLLCFQEPGDPEKLGEFLQKDNLCVHYFCLILSSKL. Positions 33, 36, 58, and 61 each coordinate Zn(2+). Positions 67-92 are required for interaction and ubiquitination of the nucleosome core particle; the sequence is KLPQKGQPNRGLHGFMPEDIKKEAAR. A PHD-type zinc finger spans residues 96–145; it reads KVCFVCKRKGAAIRCQKDQCVQNFHLPCGQERGCLSQFFGEYKSYCGKHR. 24 residues coordinate Zn(2+): C98, C101, C110, C115, H120, C123, C141, H144, C159, C162, C178, C179, H185, C188, C203, C206, C247, C252, C272, C275, H281, C284, C296, and C299. Positions 150-306 are required for interaction with ubiquitinated UBE2D2; it reads IHQRSFGESC…NECLPASTED (157 aa). Residues 159 to 207 form an RING-type; degenerate zinc finger; sequence CVLCCEDLSRASVENIRSPCCSQAIYHRKCIQKYAHTSAKHFFKCPQCN. The tract at residues 243 to 300 is required for association with and ubiquitination of H3; sequence RYQHCDAPICLYEQGRDSFEDEGRWRLILCATCGSHGTHRDCSSLRPNSKKWECNECL. Over residues 352–367 the composition is skewed to low complexity; it reads EKPESSSGSSCQSWRS. The segment at 352 to 380 is disordered; the sequence is EKPESSSGSSCQSWRSKGIKVTKDCKKSK.

In terms of assembly, interacts with MEF2C; the interaction promotes MEF2C binding to its transcription targets. Interacts with GATA4; the interaction promotes GATA4 binding to its transcription targets. Interacts with UBE2D2; the interaction inhibits cleavage of PHF7 and promotes association of the complex with the nucleosome core particle.

Its subcellular location is the nucleus. It catalyses the reaction S-ubiquitinyl-[E2 ubiquitin-conjugating enzyme]-L-cysteine + [acceptor protein]-L-lysine = [E2 ubiquitin-conjugating enzyme]-L-cysteine + N(6)-ubiquitinyl-[acceptor protein]-L-lysine.. The protein operates within protein modification; protein ubiquitination. Its function is as follows. E3 ubiquitin-protein ligase which ubiquitinates histone H3 at 'Lys-14'. Required for male fertility, via inhibition of SPOP-mediated BRDT degradation when in the presence of acetylated histone H4 in early condensing spermatids. Stabilization of BRDT allows it to facilitate histone removal in early condensing spermatids and promote the progression of histone-to-protamine exchange. Promotes the expression of steroidogenesis proteins in the testes, and as a result plays a role in maintaining testosterone levels and repressing osteoclastogenesis. Promotes transcription of cardiac enhancer genes by facilitating binding of cardiac transcription factors such as MEF2C and GATA4 to target gene promoters. Ubiquitinates histone H4. Ubiquitinates histone H2A and H3 as part of the nucleosome core particle. The chain is E3 ubiquitin-protein ligase PHF7 from Rattus norvegicus (Rat).